A 121-amino-acid chain; its full sequence is Large ribosomal subunit protein uL14 (121 aa).

This sequence belongs to the universal ribosomal protein uL14 family. As to quaternary structure, part of the 50S ribosomal subunit. Forms a cluster with proteins L3 and L19. In the 70S ribosome, L14 and L19 interact and together make contacts with the 16S rRNA in bridges B5 and B8.

Binds to 23S rRNA. Forms part of two intersubunit bridges in the 70S ribosome. This is Large ribosomal subunit protein uL14 from Parasynechococcus marenigrum (strain WH8102).